The following is a 156-amino-acid chain: ATP synthase subunit b (156 aa).

A helical transmembrane segment spans residues 4 to 26 (GATFWGPMISFALFVWFTMKYVW).

Belongs to the ATPase B chain family. In terms of assembly, F-type ATPases have 2 components, F(1) - the catalytic core - and F(0) - the membrane proton channel. F(1) has five subunits: alpha(3), beta(3), gamma(1), delta(1), epsilon(1). F(0) has three main subunits: a(1), b(2) and c(10-14). The alpha and beta chains form an alternating ring which encloses part of the gamma chain. F(1) is attached to F(0) by a central stalk formed by the gamma and epsilon chains, while a peripheral stalk is formed by the delta and b chains.

It localises to the cell inner membrane. Its function is as follows. F(1)F(0) ATP synthase produces ATP from ADP in the presence of a proton or sodium gradient. F-type ATPases consist of two structural domains, F(1) containing the extramembraneous catalytic core and F(0) containing the membrane proton channel, linked together by a central stalk and a peripheral stalk. During catalysis, ATP synthesis in the catalytic domain of F(1) is coupled via a rotary mechanism of the central stalk subunits to proton translocation. Functionally, component of the F(0) channel, it forms part of the peripheral stalk, linking F(1) to F(0). This Alkalilimnicola ehrlichii (strain ATCC BAA-1101 / DSM 17681 / MLHE-1) protein is ATP synthase subunit b.